Consider the following 380-residue polypeptide: Ribosomal RNA large subunit methyltransferase F (380 aa).

Disordered stretches follow at residues 1–54 (MSHK…PRNA) and 260–279 (SQVMSPQVQPSGKVKPATDK). The span at 21 to 32 (QRQVVSKSSLQK) shows a compositional bias: low complexity. Basic residues predominate over residues 44–53 (QKSKALHPRN). Over residues 260–270 (SQVMSPQVQPS) the composition is skewed to low complexity.

It belongs to the methyltransferase superfamily. METTL16/RlmF family.

It localises to the cytoplasm. It carries out the reaction adenosine(1618) in 23S rRNA + S-adenosyl-L-methionine = N(6)-methyladenosine(1618) in 23S rRNA + S-adenosyl-L-homocysteine + H(+). In terms of biological role, specifically methylates the adenine in position 1618 of 23S rRNA. The polypeptide is Ribosomal RNA large subunit methyltransferase F (Shewanella pealeana (strain ATCC 700345 / ANG-SQ1)).